The chain runs to 100 residues: Transcription and mRNA export factor SUS1 (100 aa).

The protein belongs to the ENY2 family. In terms of assembly, component of the nuclear pore complex (NPC)-associated TREX-2 complex (transcription and export complex 2), composed of at least SUS1, SAC3, THP1, SEM1, and CDC31. TREX-2 contains 2 SUS1 chains. The TREX-2 complex interacts with the nucleoporin NUP1. Component of the 1.8 MDa SAGA transcription coactivator-HAT complex. SAGA is built of 5 distinct domains with specialized functions. Within the SAGA complex, SUS1, SGF11, SGF73 and UBP8 form an additional subcomplex of SAGA called the DUB module (deubiquitination module). Interacts directly with THP1, SAC3, SGF11, and with the RNA polymerase II.

The protein localises to the nucleus. Its subcellular location is the nucleoplasm. It is found in the cytoplasm. The protein resides in the P-body. Functionally, involved in mRNA export coupled transcription activation by association with both the TREX-2 and the SAGA complexes. At the promoters, SAGA is required for recruitment of the basal transcription machinery. It influences RNA polymerase II transcriptional activity through different activities such as TBP interaction and promoter selectivity, interaction with transcription activators, and chromatin modification through histone acetylation and deubiquitination. Within the SAGA complex, participates in a subcomplex required for deubiquitination of H2B and for the maintenance of steady-state H3 methylation levels. The TREX-2 complex functions in docking export-competent ribonucleoprotein particles (mRNPs) to the nuclear entrance of the nuclear pore complex (nuclear basket). TREX-2 participates in mRNA export and accurate chromatin positioning in the nucleus by tethering genes to the nuclear periphery. May also be involved in cytoplasmic mRNA decay by interaction with components of P-bodies. This is Transcription and mRNA export factor SUS1 from Cryptococcus neoformans var. neoformans serotype D (strain B-3501A) (Filobasidiella neoformans).